A 1314-amino-acid chain; its full sequence is MPLRGVTALSDFRVEKLLQKAAALGLPEVKLSSEFWYFAGSEKALDAATVEKLQALLAAQSVEQTPEAREGLHLFLVTPRLGTISPWASKATNIAENCGLAGIERIERGMAVWLEGALTDEQKQQWAALLHDRMTESVLPDFQTASKLFHHLKSETFSTVDVLGGGKEALVKANTETGLALSADEIDYLVENYQALQRNPSDVELMMFAQANSEHCRHKIFNADFILNGEKQPKSLFGMIRDTHNAHPEGTVVAYKDNSSVIKGAKIERFYPNAAENQGYRFHEEDTHIIMKVETHNHPTAIAPFAGAATGAGGEIRDEGATGKGSRPKAGLTGFTVSNLNIPDLKQPWEQDYGKPEHISSPLDIMIEGPIGGAAFNNEFGRPNLLGYFRTFEEKFDGQVRGYHKPIMIAGGLGSIQAQQTHKDEIPEGALLIQLGGPGMLIGLGGGAASSMDTGTNDASLDFNSVQRGNPEIERRAQEVIDRCWQLGDQNPIISIHDVGAGGLSNAFPELVNDAGRGAVFELREVPLEEHGLTPLQIWCNESQERYVLSILEKDLDTFRAICERERCPFAVVGTATDDGHLKVRDDLFSNNPVDLPLNVLLGKPPKTTRTDKTVTPSKKPFHAGDIDITEAAYRVLRLPAVAAKNFLITIGDRSVGGMTHRDQMVGKYQTPVADCAVTMMGFNTYRGEAMSMGEKPAVALFDAPASGRMCVGEAITNIAAVNIGDIGNIKLSANWMAACGNEGEDEKLYRTVEAVSKACQALDLSIPVGKDSLSMKTVWQDGEEKKSVVSPLSLIISAFAPVKDVRKTVTPELKNVEGSVLLFIDLGFGKARMGGSAFGQVYNNMSGDAPDLDDAGRLKAFYSVIQQLVAEDKLLAYHDRSDGGLFATLAEMAFAARCGISADIDCLMDKFLPIHLPDFQGDPAEDLSDELYNHAAIKILFNEELGAVIQIRQKDRDYVDAAFETAGLTDAVSRIGSPDFDNEFISFFGYGYFLEQNRADLQRAWQETSHAIQRLRDNPACADSEFALIGDNERSALFADVKFDVNEDIAAPFINSGAKPKIAILREQGVNGQIEMAAAFTRAGFDAYDVHMSDLMAGRFRLADFKMLAACGGFSYGDVLGAGEGWAKSILFHPALRDQFAAFFADPNTLTLGVCNGCQMVSNLAEIIPGAETWPKFKRNLSEQFEARLNMVHVPKSASLILNEMQDSSLPVVVSHGEGRADFALHGGNISADLGIALQYVDGQNQVTQTYPLNPNGSPQGIAGITNADGRVTIMMPHPERVYRAAQMSRKPEGWTELSGWYRLFAGARKALG.

ATP is bound by residues 307 to 318 and A674; that span reads GAATGAGGEIRD. D675, E714, N718, and D880 together coordinate Mg(2+). S882 provides a ligand contact to ATP. The region spanning 1063 to 1314 is the Glutamine amidotransferase type-1 domain; it reads IAILREQGVN…LFAGARKALG (252 aa). C1156 serves as the catalytic Nucleophile. Active-site residues include H1279 and E1281.

The protein in the N-terminal section; belongs to the FGAMS family. Monomer.

It localises to the cytoplasm. The catalysed reaction is N(2)-formyl-N(1)-(5-phospho-beta-D-ribosyl)glycinamide + L-glutamine + ATP + H2O = 2-formamido-N(1)-(5-O-phospho-beta-D-ribosyl)acetamidine + L-glutamate + ADP + phosphate + H(+). It participates in purine metabolism; IMP biosynthesis via de novo pathway; 5-amino-1-(5-phospho-D-ribosyl)imidazole from N(2)-formyl-N(1)-(5-phospho-D-ribosyl)glycinamide: step 1/2. Its function is as follows. Phosphoribosylformylglycinamidine synthase involved in the purines biosynthetic pathway. Catalyzes the ATP-dependent conversion of formylglycinamide ribonucleotide (FGAR) and glutamine to yield formylglycinamidine ribonucleotide (FGAM) and glutamate. The chain is Phosphoribosylformylglycinamidine synthase from Neisseria gonorrhoeae (strain ATCC 700825 / FA 1090).